A 237-amino-acid chain; its full sequence is Demethylmenaquinone methyltransferase (237 aa).

S-adenosyl-L-methionine-binding positions include Thr58, Asp79, and 106–107; that span reads NA.

The protein belongs to the class I-like SAM-binding methyltransferase superfamily. MenG/UbiE family.

The enzyme catalyses a 2-demethylmenaquinol + S-adenosyl-L-methionine = a menaquinol + S-adenosyl-L-homocysteine + H(+). It functions in the pathway quinol/quinone metabolism; menaquinone biosynthesis; menaquinol from 1,4-dihydroxy-2-naphthoate: step 2/2. Methyltransferase required for the conversion of demethylmenaquinol (DMKH2) to menaquinol (MKH2). In Bacillus anthracis (strain A0248), this protein is Demethylmenaquinone methyltransferase.